The sequence spans 260 residues: CD40 ligand (260 aa).

Topologically, residues 1–22 are cytoplasmic; that stretch reads MIETYSQTAPRSVAPGPPVSMK. Residues 23–46 form a helical; Signal-anchor for type II membrane protein membrane-spanning segment; it reads IFMYLLTVFLITQMIGSALFAVYL. Residues 47–260 lie on the Extracellular side of the membrane; that stretch reads HRRLDKIEDE…GFTSFGLLKL (214 aa). Positions 121–260 constitute a THD domain; sequence VAAHVISEAS…GFTSFGLLKL (140 aa). A disulfide bridge links Cys-177 with Cys-217. Asn-239 carries an N-linked (GlcNAc...) asparagine glycan.

Belongs to the tumor necrosis factor family. Homotrimer. Interacts with CD28. CD40 ligand, soluble form: Exists as either a monomer or a homotrimer. Forms a ternary complex between CD40 and integrins for CD40-CD40LG signaling. Post-translationally, the soluble form derives from the membrane form by proteolytic processing.

Its subcellular location is the cell membrane. It localises to the cell surface. The protein resides in the secreted. Cytokine that acts as a ligand to CD40/TNFRSF5. Costimulates T-cell proliferation and cytokine production. Its cross-linking on T-cells generates a costimulatory signal which enhances the production of IL4 and IL10 in conjunction with the TCR/CD3 ligation and CD28 costimulation. Induces the activation of NF-kappa-B. Induces the activation of kinases MAPK8 and PAK2 in T-cells. Mediates B-cell proliferation in the absence of co-stimulus as well as IgE production in the presence of IL4. Involved in immunoglobulin class switching. In terms of biological role, acts as a ligand for integrins, specifically ITGA5:ITGB1 and ITGAV:ITGB3; both integrins and the CD40 receptor are required for activation of CD40-CD40LG signaling, which have cell-type dependent effects, such as B-cell activation, NF-kappa-B signaling and anti-apoptotic signaling. This Felis catus (Cat) protein is CD40 ligand (CD40LG).